Consider the following 459-residue polypeptide: Proton-coupled folate transporter (459 aa).

The residue at position 1 (methionine 1) is an N-acetylmethionine. Topologically, residues 1–25 (MEGRVSPVGSSHRLLTAAVLFRGPV) are cytoplasmic. A Phosphoserine modification is found at serine 6. A helical transmembrane segment spans residues 26 to 44 (EPLVFLANFALVLQGPLTT). At 45 to 82 (QYIWHRISTELGYNGTRHRENCGNQSADPVLKEVETLT) the chain is on the extracellular side. 2 N-linked (GlcNAc...) asparagine glycosylation sites follow: asparagine 58 and asparagine 68. Cysteine 66 and cysteine 298 are joined by a disulfide. The chain crosses the membrane as a helical span at residues 83 to 108 (SHWTLYMNVGGFLVGLFWSTLLGAWS). Over 109–112 (DRVG) the chain is Cytoplasmic. The helical transmembrane segment at 113–135 (RRPLLVLASLGLLLQAVVSIFVV) threads the bilayer. Residues 136–140 (QLQLH) are Extracellular-facing. The chain crosses the membrane as a helical span at residues 141–154 (IGFFVLGRALCALL). At 155-177 (GDFNGLLAASFASVADVSSNHSR) the chain is on the cytoplasmic side. H(+) contacts are provided by aspartate 156 and glutamate 185. Residues 178-203 (TFRMALLEACIGVAGTLASLLGGHWL) traverse the membrane as a helical segment. The Extracellular portion of the chain corresponds to 204-208 (RAQGY). Residues 209 to 227 (ANPFWLALAVLIVMTLYAA) traverse the membrane as a helical segment. The Cytoplasmic portion of the chain corresponds to 228 to 266 (FCFGETVKEPKSTRLFTLRHHRSIVQLYVVPAPEKSRMH). A helical membrane pass occupies residues 267 to 289 (LALYSLAIFVVVTVHFGAQDILT). Histidine 281 provides a ligand contact to H(+). The Extracellular segment spans residues 290–302 (LYELSTPLCWDSK). A helical membrane pass occupies residues 303–325 (LIGYGSAAQHLPYLTSLLGLRLL). Residues 326-331 (QFCLAD) lie on the Cytoplasmic side of the membrane. Residues 332 to 351 (TWVAEIGLAFNILGMVVFAF) form a helical membrane-spanning segment. Topologically, residues 352–355 (ATIT) are extracellular. Residues 356 to 376 (PLMFTGYGLLFLSLVTTPVIR) form a helical membrane-spanning segment. Over 377–388 (AKLSKLVSESEQ) the chain is Cytoplasmic. The helical transmembrane segment at 389-414 (GALFSAVACVNSLAMLMASGIFNSLY) threads the bilayer. The Extracellular segment spans residues 415–422 (PATLNFMK). A helical membrane pass occupies residues 423–441 (GFPFLLGAGLLFIPAILIG). Over 442–459 (VLEKVNPHPEFQQFPQNS) the chain is Cytoplasmic.

Belongs to the major facilitator superfamily. SLC46A family. As to quaternary structure, monomer. Expressed almost exclusively in the small intestine: expressed at high level in the upper half of the small intestine (duodenum and jejunum), expression decreases downwardly in the subsequent quarter and is undetectable in the last quarter (the lowest ileum). Expressed at low level in other tissues, including liver.

The protein resides in the cell membrane. It is found in the apical cell membrane. The protein localises to the basolateral cell membrane. It localises to the endosome membrane. Its subcellular location is the cytoplasm. It catalyses the reaction folate(in) + H(+)(in) = folate(out) + H(+)(out). The catalysed reaction is (6S)-5-methyl-5,6,7,8-tetrahydrofolate(in) + H(+)(in) = (6S)-5-methyl-5,6,7,8-tetrahydrofolate(out) + H(+)(out). The enzyme catalyses methotrexate(in) + H(+)(in) = methotrexate(out) + H(+)(out). It carries out the reaction pemetrexed(in) + H(+)(in) = pemetrexed(out) + H(+)(out). Its activity is regulated as follows. In contrast to human ortholog, not inhibited by myricetin. Its function is as follows. Proton-coupled folate symporter that mediates folate absorption using an H(+) gradient as a driving force. Involved in the intestinal absorption of folates at the brush-border membrane of the proximal jejunum, and the transport from blood to cerebrospinal fluid across the choroid plexus. Functions at acidic pH via alternate outward- and inward-open conformation states. Protonation of residues in the outward open state primes the protein for transport. Binding of folate promotes breaking of salt bridge network and subsequent closure of the extracellular gate, leading to the inward-open state and release of protons and folate. Also able to transport antifolate drugs, such as methotrexate and pemetrexed. Involved in FOLR1-mediated endocytosis by serving as a route of export of folates from acidified endosomes. Also acts as a lower-affinity, pH-independent heme carrier protein and constitutes the main importer of heme in the intestine. Imports heme in the retina and retinal pigment epithelium, in neurons of the hippocampus, in hepatocytes and in the renal epithelial cells. Hence, participates in the trafficking of heme and increases intracellular iron content. This Rattus norvegicus (Rat) protein is Proton-coupled folate transporter.